A 141-amino-acid polypeptide reads, in one-letter code: Large ribosomal subunit protein bL17 (141 aa).

Belongs to the bacterial ribosomal protein bL17 family. In terms of assembly, part of the 50S ribosomal subunit. Contacts protein L32.

The chain is Large ribosomal subunit protein bL17 from Sinorhizobium fredii (strain NBRC 101917 / NGR234).